The following is a 154-amino-acid chain: SKP1-like protein 13 (154 aa).

The interaction with the F-box domain of F-box proteins stretch occupies residues 96–154; the sequence is MLAANYLNIKDLLDLGCQTVADMITGKKPDEIRALLGIENDFTPEEEEEIRKENQWAFE.

It belongs to the SKP1 family. In terms of assembly, part of a SCF (SKP1-cullin-F-box) protein ligase complex. Interacts with ADO3/FKF1, EBF1, PP2A13, SKIP15, SKIP16, CPR1/CPR30, At1g55000, At3g61590, At1g67340, At1g78100, At3g04660, At4g38940, At4g39550 and At5g49610. Mostly expressed in inflorescences, and, to a lower extent, in seedlings and siliques. Also detected in cotyledons, leaves, pollen and seeds.

The protein localises to the nucleus. It participates in protein modification; protein ubiquitination. Its function is as follows. Involved in ubiquitination and subsequent proteasomal degradation of target proteins. Together with CUL1, RBX1 and a F-box protein, it forms a SCF E3 ubiquitin ligase complex. The functional specificity of this complex depends on the type of F-box protein. In the SCF complex, it serves as an adapter that links the F-box protein to CUL1. The chain is SKP1-like protein 13 (ASK13) from Arabidopsis thaliana (Mouse-ear cress).